We begin with the raw amino-acid sequence, 130 residues long: Small ribosomal subunit protein uS11 (130 aa).

Belongs to the universal ribosomal protein uS11 family. In terms of assembly, part of the 30S ribosomal subunit. Interacts with proteins S7 and S18. Binds to IF-3.

In terms of biological role, located on the platform of the 30S subunit, it bridges several disparate RNA helices of the 16S rRNA. Forms part of the Shine-Dalgarno cleft in the 70S ribosome. The sequence is that of Small ribosomal subunit protein uS11 from Phytoplasma mali (strain AT).